Reading from the N-terminus, the 126-residue chain is Small ribosomal subunit protein uS13c (126 aa).

The tract at residues 95–126 is disordered; sequence GLPLRGQNTRTNARTKRGIKKTMAGKKKAPRK. Basic residues predominate over residues 107–126; the sequence is ARTKRGIKKTMAGKKKAPRK.

The protein belongs to the universal ribosomal protein uS13 family. As to quaternary structure, part of the 30S ribosomal subunit.

The protein resides in the plastid. It localises to the chloroplast. Located at the top of the head of the 30S subunit, it contacts several helices of the 16S rRNA. The chain is Small ribosomal subunit protein uS13c from Gracilaria tenuistipitata var. liui (Red alga).